The chain runs to 906 residues: Putative disease resistance protein At1g59780 (906 aa).

The stretch at 20-59 (KLLSQEYERFQGVEEQITELRDDLKMLMAFLSDADAKKQT) forms a coiled coil. The NB-ARC domain occupies 138–452 (SHAQLERKRE…AEGITYPGNY (315 aa)). 187–194 (GLGGLGKT) is an ATP binding site. 4 LRR repeats span residues 572–597 (LPLL…IGKL), 599–619 (HLKY…SLRN), 620–644 (LKSL…VFKE), and 825–850 (MPLL…RFIS).

Belongs to the disease resistance NB-LRR family.

In terms of biological role, potential disease resistance protein. In Arabidopsis thaliana (Mouse-ear cress), this protein is Putative disease resistance protein At1g59780.